We begin with the raw amino-acid sequence, 74 residues long: Large ribosomal subunit protein bL31 (74 aa).

Zn(2+) is bound by residues cysteine 16, cysteine 18, cysteine 37, and cysteine 40.

The protein belongs to the bacterial ribosomal protein bL31 family. Type A subfamily. Part of the 50S ribosomal subunit. The cofactor is Zn(2+).

Binds the 23S rRNA. This Nitrosomonas europaea (strain ATCC 19718 / CIP 103999 / KCTC 2705 / NBRC 14298) protein is Large ribosomal subunit protein bL31.